The chain runs to 442 residues: Putative nucleotide-sugar transporter YMD8 (442 aa).

Topologically, residues 1-3 (MNR) are cytoplasmic. The helical transmembrane segment at 4–24 (TVFLAFVFGWYFCSIALSIYN) threads the bilayer. Over 25 to 32 (RWMFDPKD) the chain is Extracellular. The chain crosses the membrane as a helical span at residues 33-53 (GLGIGYPVLVTTFHQATLWLL). Residues 54–76 (SGIYIKLRHKPVKNVLRKNNGFN) are Cytoplasmic-facing. A helical membrane pass occupies residues 77–97 (WSFFLKFLLPTAVASAGDIGL). Residues 98–107 (SNVSFQYVPL) are Extracellular-facing. N99 is a glycosylation site (N-linked (GlcNAc...) asparagine). The chain crosses the membrane as a helical span at residues 108-128 (TIYTIIKSSSIAFVLLFGCIF). The Cytoplasmic portion of the chain corresponds to 129–132 (KLEK). A helical membrane pass occupies residues 133–153 (FHWKLALSVIIMFVGVALMVF). The Extracellular portion of the chain corresponds to 154-166 (KPSDSTSTKNDQA). The helical transmembrane segment at 167–187 (LVIFGSFLVLASSCLSGLRWV) threads the bilayer. At 188-254 (YTQLMLRNNP…PIHTIHQLAP (67 aa)) the chain is on the cytoplasmic side. S209 carries the phosphoserine modification. The chain crosses the membrane as a helical span at residues 255–275 (IMGITLLLTSLLVEKPFPGIF). The Extracellular portion of the chain corresponds to 276-301 (SSSIFRLDTSNGGVGTETTVLSIVRG). The helical transmembrane segment at 302-322 (IVLLILPGFAVFLLTICEFSI) threads the bilayer. Residues 323–329 (LEQTPVL) lie on the Cytoplasmic side of the membrane. The helical transmembrane segment at 330 to 350 (TVSIVGIVKELLTVIFGIIIL) threads the bilayer. The Extracellular segment spans residues 351 to 355 (SERLS). Residues 356–376 (GFYNWLGMLIIMADVCYYNYF) traverse the membrane as a helical segment. The Cytoplasmic segment spans residues 377-442 (RYKQDLLQKY…QNVSRSSQQV (66 aa)).

The protein belongs to the TPT transporter family. SLC35C subfamily.

The protein localises to the golgi apparatus membrane. It is found in the cytoplasmic vesicle. The protein resides in the COPI-coated vesicle membrane. The chain is Putative nucleotide-sugar transporter YMD8 (YMD8) from Saccharomyces cerevisiae (strain ATCC 204508 / S288c) (Baker's yeast).